The chain runs to 256 residues: Bialaphos biosynthetic pathway regulatory protein (256 aa).

In terms of domain architecture, HTH luxR-type spans 184 to 249 (ETADAIDVSD…QLGARAAECR (66 aa)). Residues 208-227 (DVAMARSLGISTRTLRRVIT) constitute a DNA-binding region (H-T-H motif).

Its function is as follows. Involved in the regulation of the biosynthesis of phosphinothricin tripeptide (PTT), also known as bialaphos (BA), a natural-product antibiotic and potent herbicide. This chain is Bialaphos biosynthetic pathway regulatory protein (brpA), found in Streptomyces hygroscopicus.